A 297-amino-acid chain; its full sequence is Nucleotide-binding protein BTH_I0482 (297 aa).

An ATP-binding site is contributed by 8–15 (GISGSGKS). A GTP-binding site is contributed by 57–60 (DARS).

Belongs to the RapZ-like family.

In terms of biological role, displays ATPase and GTPase activities. The polypeptide is Nucleotide-binding protein BTH_I0482 (Burkholderia thailandensis (strain ATCC 700388 / DSM 13276 / CCUG 48851 / CIP 106301 / E264)).